We begin with the raw amino-acid sequence, 92 residues long: UPF0335 protein BMEI0289 (92 aa).

The protein belongs to the UPF0335 family.

This Brucella melitensis biotype 1 (strain ATCC 23456 / CCUG 17765 / NCTC 10094 / 16M) protein is UPF0335 protein BMEI0289.